The primary structure comprises 446 residues: Glutamyl-tRNA reductase (446 aa).

Residues 49-52 (TCNR), Ser-107, 112-114 (EPQ), and Gln-118 contribute to the substrate site. Cys-50 serves as the catalytic Nucleophile. Residue 187-192 (GAGETI) participates in NADP(+) binding. Residues 417-446 (NANEDTRESVDKEQTGTTQGAARGDQRSTG) form a disordered region. Basic and acidic residues predominate over residues 420 to 430 (EDTRESVDKEQ).

The protein belongs to the glutamyl-tRNA reductase family. As to quaternary structure, homodimer.

The enzyme catalyses (S)-4-amino-5-oxopentanoate + tRNA(Glu) + NADP(+) = L-glutamyl-tRNA(Glu) + NADPH + H(+). It participates in porphyrin-containing compound metabolism; protoporphyrin-IX biosynthesis; 5-aminolevulinate from L-glutamyl-tRNA(Glu): step 1/2. In terms of biological role, catalyzes the NADPH-dependent reduction of glutamyl-tRNA(Glu) to glutamate 1-semialdehyde (GSA). The sequence is that of Glutamyl-tRNA reductase from Alkalilimnicola ehrlichii (strain ATCC BAA-1101 / DSM 17681 / MLHE-1).